The chain runs to 1279 residues: ATP-dependent helicase/nuclease subunit A (1279 aa).

A UvrD-like helicase ATP-binding domain is found at 4–499; sequence TKWTDEQRQA…VKLFKNFRSR (496 aa). An ATP-binding site is contributed by 25–32; that stretch reads AGAGAGKT. A UvrD-like helicase C-terminal domain is found at 526–853; sequence EEALKVGASY…RIMSIHKSKG (328 aa).

The protein belongs to the helicase family. AddA subfamily. In terms of assembly, heterodimer of AddA and AddB/RexB. The cofactor is Mg(2+).

The enzyme catalyses Couples ATP hydrolysis with the unwinding of duplex DNA by translocating in the 3'-5' direction.. The catalysed reaction is ATP + H2O = ADP + phosphate + H(+). The heterodimer acts as both an ATP-dependent DNA helicase and an ATP-dependent, dual-direction single-stranded exonuclease. Recognizes the chi site generating a DNA molecule suitable for the initiation of homologous recombination. The AddA nuclease domain is required for chi fragment generation; this subunit has the helicase and 3' -&gt; 5' nuclease activities. This chain is ATP-dependent helicase/nuclease subunit A, found in Clostridium botulinum (strain Langeland / NCTC 10281 / Type F).